We begin with the raw amino-acid sequence, 496 residues long: Probable cytosol aminopeptidase (496 aa).

Residues Lys-266 and Asp-271 each coordinate Mn(2+). The active site involves Lys-278. Mn(2+)-binding residues include Asp-289, Asp-348, and Glu-350. Arg-352 is a catalytic residue.

The protein belongs to the peptidase M17 family. Requires Mn(2+) as cofactor.

It localises to the cytoplasm. The enzyme catalyses Release of an N-terminal amino acid, Xaa-|-Yaa-, in which Xaa is preferably Leu, but may be other amino acids including Pro although not Arg or Lys, and Yaa may be Pro. Amino acid amides and methyl esters are also readily hydrolyzed, but rates on arylamides are exceedingly low.. It catalyses the reaction Release of an N-terminal amino acid, preferentially leucine, but not glutamic or aspartic acids.. In terms of biological role, presumably involved in the processing and regular turnover of intracellular proteins. Catalyzes the removal of unsubstituted N-terminal amino acids from various peptides. The chain is Probable cytosol aminopeptidase from Stutzerimonas stutzeri (strain A1501) (Pseudomonas stutzeri).